We begin with the raw amino-acid sequence, 337 residues long: MRNITTSAYTPTEFTIENISDTVAKISAWPFEIGYGITLAHPLRRLLYTSTIGYAPTAIHIDGVAHEFDSMRGMLEDVALFIINLKKLRFKIKGESNKEIVEFSFKGSKEIYGKDLNNDQVEVVNKDAYLATINEDAELKFTLIVEKGIGYVPSEEIKELINDPKFIALDAFFTPVREATYDIEKVLFEDNPDYEKVVLTVTTDGQITPNEAFQNALEAMYKQLSVFDKITNVRSVIKNQATSNELENTKLLQNITDLNLSARSYNCLEKAGVVYIGELALMSVSELAGLKNLGKKSLDEIKNIMESIGFPVGTSKLSDNKEILKNKIAELKAQNEG.

Residues Met-1–Thr-231 form an alpha N-terminal domain (alpha-NTD) region. The alpha C-terminal domain (alpha-CTD) stretch occupies residues Asn-248–Gly-337.

This sequence belongs to the RNA polymerase alpha chain family. In terms of assembly, homodimer. The RNAP catalytic core consists of 2 alpha, 1 beta, 1 beta' and 1 omega subunit. When a sigma factor is associated with the core the holoenzyme is formed, which can initiate transcription.

The enzyme catalyses RNA(n) + a ribonucleoside 5'-triphosphate = RNA(n+1) + diphosphate. Functionally, DNA-dependent RNA polymerase catalyzes the transcription of DNA into RNA using the four ribonucleoside triphosphates as substrates. The polypeptide is DNA-directed RNA polymerase subunit alpha (Campylobacter jejuni subsp. jejuni serotype O:6 (strain 81116 / NCTC 11828)).